We begin with the raw amino-acid sequence, 661 residues long: MFKVYSDFSPSGDQPEAIKKLVEGLQKGYRIQTLLGVTGSGKTFTMAKVVEKVGKPTLIISPNKTLAAQLYSEFKSFFPENKVEFFVSYYDYYQPEAYIPTRDLYIEKNADINEVIEKMRISAIKSIMTRKDVIVVASVSAIYNCGDPKDFSDLNFVLSVGQEIDLEGFLTHLARIGYERKEEVALGGTFRVKGDVIEIYPRYQDEGIRIELFGDEIDSIYTFDPLNRKILEKLDRVVIYPTKEFITTEEKIQRAVKSILKELEEQLEYFKKQGKHLEAERLKQRTMNDIELLTALGYCSGIENYSRHFDGRNPGDPPYSLLDYFGDDYLVFIDESHITIPQLRAMYRGDFSRKKNLVDYGFRLPCAYDNRPLKFEEFWNKVKNVIFVSATPGDFEINNSQQVVEQIIRPTGLVDPEVEVRPTQNQIDDLVNEIAKIRKRNERALVTVLTKKTAEKLAEYLIEMGIKALYIHSELDTIERVEVLKKLRRGDVEVVVGVNLLREGLDLPEVSLVAILDSDTEGFLRSETTLIQIIGRVARNINGKVIMYADKITPAMKKAIDETNRRRKIQIEYNKKHGITPKTIIKPLDEEIFKQFMTDEDEEKEEIKTIFELKESLSIEEYIALLEEEMYKAASELRYEDAARLRDELFNIREKLKNKSF.

One can recognise a Helicase ATP-binding domain in the interval 23 to 180 (EGLQKGYRIQ…THLARIGYER (158 aa)). Position 36 to 43 (36 to 43 (GVTGSGKT)) interacts with ATP. Residues 89–112 (YYDYYQPEAYIPTRDLYIEKNADI) carry the Beta-hairpin motif. The Helicase C-terminal domain occupies 426-592 (QIDDLVNEIA…TIIKPLDEEI (167 aa)). Positions 620–655 (EEYIALLEEEMYKAASELRYEDAARLRDELFNIREK) constitute a UVR domain.

This sequence belongs to the UvrB family. Forms a heterotetramer with UvrA during the search for lesions. Interacts with UvrC in an incision complex.

The protein resides in the cytoplasm. Functionally, the UvrABC repair system catalyzes the recognition and processing of DNA lesions. A damage recognition complex composed of 2 UvrA and 2 UvrB subunits scans DNA for abnormalities. Upon binding of the UvrA(2)B(2) complex to a putative damaged site, the DNA wraps around one UvrB monomer. DNA wrap is dependent on ATP binding by UvrB and probably causes local melting of the DNA helix, facilitating insertion of UvrB beta-hairpin between the DNA strands. Then UvrB probes one DNA strand for the presence of a lesion. If a lesion is found the UvrA subunits dissociate and the UvrB-DNA preincision complex is formed. This complex is subsequently bound by UvrC and the second UvrB is released. If no lesion is found, the DNA wraps around the other UvrB subunit that will check the other stand for damage. This is UvrABC system protein B from Thermosipho africanus (strain TCF52B).